The chain runs to 925 residues: Coronin-7 (925 aa).

4 WD repeats span residues 75–115, 124–163, 166–205, and 209–253; these read CHSD…QALP, PEDLPVEVLQFHPTSDGILVSAAGTTVKVWDAAKQQPLTE, AHGDLVQSAVWSRDGALVGTACKDKQLRIFDPRTKPRASQ, and AHEN…SALA. The tract at residues 419 to 461 is disordered; sequence VGDADASEGFSSPPSSLTSPSTPSSLGPSLSSTSGIGTSPSLR. The segment covering 429-460 has biased composition (low complexity); sequence SSPPSSLTSPSTPSSLGPSLSSTSGIGTSPSL. Phosphoserine occurs at positions 462 and 465. Lys472 participates in a covalent cross-link: Glycyl lysine isopeptide (Lys-Gly) (interchain with G-Cter in ubiquitin). WD repeat units lie at residues 542 to 582, 592 to 632, and 635 to 674; these read QNGA…LEEV, GHTE…DRLK, and GHQDQIFSLAWSPDGQQLATVCKDGRVRVYRPRSGPEPLQ. Residue Lys680 forms a Glycyl lysine isopeptide (Lys-Gly) (interchain with G-Cter in ubiquitin) linkage. Residues 728 to 768 form a WD 8 repeat; that stretch reads DVAPSTLLPSYDPDTGLVLLTGKGDTRVFLYELLPESPFFL. Residues 858 to 925 are disordered; the sequence is QPPDMSPVSQ…FEGVDEDEWD (68 aa). A compositionally biased stretch (low complexity) spans 866–882; it reads SQAPREAPARRAPSSAQ. A compositionally biased stretch (basic and acidic residues) spans 884 to 896; the sequence is LEEKSDQQKKEEL. Ser915 bears the Phosphoserine mark.

It belongs to the WD repeat coronin family. In terms of assembly, interacts with clathrin adapter AP1 complex. This interaction takes place at Golgi membranes and not AP1-positive endosomal membranes. Interacts (when ubiquitinated at Lys-472) with EPS15. The membrane-associated form is phosphorylated on tyrosine residues. Post-translationally, ubiquitinated via 'Lys-33'-linked ubiquitin chains by the BCR(KLHL20) E3 ubiquitin ligase complex: 'Lys-33'-linked ubiquitination promotes interaction with EPS15 and facilitates actin polymerization at the trans-Golgi network, thereby facilitating post-Golgi trafficking. Deubiquitinated by ZRANB1/TRABID. As to expression, widely expressed. Expressed in the spleen, peripheral leukocytes, testes, brain, thymus and small intestine.

The protein localises to the golgi apparatus membrane. Its subcellular location is the golgi apparatus. It is found in the trans-Golgi network. It localises to the cytoplasmic vesicle. The protein resides in the cytoplasm. The protein localises to the cytosol. F-actin regulator involved in anterograde Golgi to endosome transport: upon ubiquitination via 'Lys-33'-linked ubiquitin chains by the BCR(KLHL20) E3 ubiquitin ligase complex, interacts with EPS15 and localizes to the trans-Golgi network, where it promotes actin polymerization, thereby facilitating post-Golgi trafficking. May play a role in the maintenance of the Golgi apparatus morphology. In Homo sapiens (Human), this protein is Coronin-7 (CORO7).